The sequence spans 390 residues: Chorismate synthase 1 (390 aa).

The NADP(+) site is built by R39 and R45. The interval 95-117 (EQEEKEMKRKVTKPRPGHADLNG) is disordered. FMN contacts are provided by residues 132–134 (RSS), 253–254 (NA), G298, 313–317 (KPIPT), and R339.

The protein belongs to the chorismate synthase family. In terms of assembly, homotetramer. The cofactor is FMNH2.

The catalysed reaction is 5-O-(1-carboxyvinyl)-3-phosphoshikimate = chorismate + phosphate. It functions in the pathway metabolic intermediate biosynthesis; chorismate biosynthesis; chorismate from D-erythrose 4-phosphate and phosphoenolpyruvate: step 7/7. In terms of biological role, catalyzes the anti-1,4-elimination of the C-3 phosphate and the C-6 proR hydrogen from 5-enolpyruvylshikimate-3-phosphate (EPSP) to yield chorismate, which is the branch point compound that serves as the starting substrate for the three terminal pathways of aromatic amino acid biosynthesis. This reaction introduces a second double bond into the aromatic ring system. The sequence is that of Chorismate synthase 1 from Bacillus thuringiensis (strain Al Hakam).